A 550-amino-acid polypeptide reads, in one-letter code: Hydroxylamine reductase (550 aa).

4 residues coordinate [2Fe-2S] cluster: Cys3, Cys6, Cys18, and Cys25. Hybrid [4Fe-2O-2S] cluster-binding residues include His249, Glu273, Cys317, Cys405, Cys433, Cys458, Glu492, and Lys494. Cys405 is modified (cysteine persulfide).

Belongs to the HCP family. It depends on [2Fe-2S] cluster as a cofactor. Hybrid [4Fe-2O-2S] cluster is required as a cofactor.

It localises to the cytoplasm. It carries out the reaction A + NH4(+) + H2O = hydroxylamine + AH2 + H(+). Catalyzes the reduction of hydroxylamine to form NH(3) and H(2)O. The protein is Hydroxylamine reductase of Yersinia pseudotuberculosis serotype O:1b (strain IP 31758).